We begin with the raw amino-acid sequence, 24 residues long: 12 kDa protein (24 aa).

In Mycolicibacterium smegmatis (Mycobacterium smegmatis), this protein is 12 kDa protein.